The primary structure comprises 158 residues: Transcription elongation factor GreA (158 aa).

A coiled-coil region spans residues glutamate 53–glutamine 73.

This sequence belongs to the GreA/GreB family.

Necessary for efficient RNA polymerase transcription elongation past template-encoded arresting sites. The arresting sites in DNA have the property of trapping a certain fraction of elongating RNA polymerases that pass through, resulting in locked ternary complexes. Cleavage of the nascent transcript by cleavage factors such as GreA or GreB allows the resumption of elongation from the new 3'terminus. GreA releases sequences of 2 to 3 nucleotides. The polypeptide is Transcription elongation factor GreA (Halorhodospira halophila (strain DSM 244 / SL1) (Ectothiorhodospira halophila (strain DSM 244 / SL1))).